Here is a 424-residue protein sequence, read N- to C-terminus: Glutamate-1-semialdehyde 2,1-aminomutase (424 aa).

Lys263 carries the post-translational modification N6-(pyridoxal phosphate)lysine.

This sequence belongs to the class-III pyridoxal-phosphate-dependent aminotransferase family. HemL subfamily. As to quaternary structure, homodimer. The cofactor is pyridoxal 5'-phosphate.

It is found in the cytoplasm. It carries out the reaction (S)-4-amino-5-oxopentanoate = 5-aminolevulinate. It functions in the pathway porphyrin-containing compound metabolism; protoporphyrin-IX biosynthesis; 5-aminolevulinate from L-glutamyl-tRNA(Glu): step 2/2. This is Glutamate-1-semialdehyde 2,1-aminomutase from Campylobacter jejuni (strain RM1221).